A 572-amino-acid polypeptide reads, in one-letter code: Phenylalanine--tRNA ligase beta subunit (572 aa).

The B5 domain occupies 278–353; it reads LTPKEFEVEF…IAYGYNEIKP (76 aa). Mg(2+)-binding residues include aspartate 331, aspartate 337, glutamate 340, and aspartate 341.

This sequence belongs to the phenylalanyl-tRNA synthetase beta subunit family. Type 2 subfamily. In terms of assembly, tetramer of two alpha and two beta subunits. Mg(2+) serves as cofactor.

The protein localises to the cytoplasm. The catalysed reaction is tRNA(Phe) + L-phenylalanine + ATP = L-phenylalanyl-tRNA(Phe) + AMP + diphosphate + H(+). This is Phenylalanine--tRNA ligase beta subunit from Thermococcus onnurineus (strain NA1).